Consider the following 224-residue polypeptide: Urease accessory protein UreF (224 aa).

It belongs to the UreF family. In terms of assembly, ureD, UreF and UreG form a complex that acts as a GTP-hydrolysis-dependent molecular chaperone, activating the urease apoprotein by helping to assemble the nickel containing metallocenter of UreC. The UreE protein probably delivers the nickel.

The protein localises to the cytoplasm. Required for maturation of urease via the functional incorporation of the urease nickel metallocenter. The polypeptide is Urease accessory protein UreF (Pseudomonas putida (strain GB-1)).